The following is a 285-amino-acid chain: NADPH-dependent 7-cyano-7-deazaguanine reductase (285 aa).

Residue 91–93 participates in substrate binding; it reads IES. 93–94 contributes to the NADPH binding site; that stretch reads SK. C191 functions as the Thioimide intermediate in the catalytic mechanism. The Proton donor role is filled by D198. 230–231 lines the substrate pocket; the sequence is HE. 259 to 260 contacts NADPH; that stretch reads RG.

The protein belongs to the GTP cyclohydrolase I family. QueF type 2 subfamily. In terms of assembly, homodimer.

The protein resides in the cytoplasm. It carries out the reaction 7-aminomethyl-7-carbaguanine + 2 NADP(+) = 7-cyano-7-deazaguanine + 2 NADPH + 3 H(+). Its pathway is tRNA modification; tRNA-queuosine biosynthesis. In terms of biological role, catalyzes the NADPH-dependent reduction of 7-cyano-7-deazaguanine (preQ0) to 7-aminomethyl-7-deazaguanine (preQ1). In Legionella pneumophila (strain Corby), this protein is NADPH-dependent 7-cyano-7-deazaguanine reductase.